The primary structure comprises 129 residues: UPF0148 protein AF_2370 (129 aa).

The disordered stretch occupies residues 61–80; the sequence is SAAKAESEEKPPESTKPAVK.

This sequence belongs to the UPF0148 family.

The polypeptide is UPF0148 protein AF_2370 (Archaeoglobus fulgidus (strain ATCC 49558 / DSM 4304 / JCM 9628 / NBRC 100126 / VC-16)).